The primary structure comprises 188 residues: Mitochondrial import receptor subunit TOM20 homolog (188 aa).

Residues 1 to 12 are Mitochondrial intermembrane-facing; sequence MTDTLFGFNKSN. A helical transmembrane segment spans residues 13-31; the sequence is VVLAAGVAGAAFLGYCIYF. The Cytoplasmic segment spans residues 32-188; sequence DHKRINAPDY…ELIDDTDDLE (157 aa). 2 disordered regions span residues 48 to 67 and 155 to 188; these read KRRAQAGSGGMAARRPPAGG and ADEAENEPPLVQYLGDGPPPAQIQELIDDTDDLE. Low complexity predominate over residues 58–67; sequence MAARRPPAGG.

The protein belongs to the Tom20 family. In terms of assembly, forms part of the preprotein translocase complex of the outer mitochondrial membrane (TOM complex).

It localises to the mitochondrion outer membrane. Its function is as follows. Central component of the receptor complex responsible for the recognition and translocation of cytosolically synthesized mitochondrial preproteins. Together with TOM22 functions as the transit peptide receptor at the surface of the mitochondrion outer membrane and facilitates the movement of preproteins into the translocation pore. The chain is Mitochondrial import receptor subunit TOM20 homolog (tomm-20) from Caenorhabditis briggsae.